Reading from the N-terminus, the 347-residue chain is Phosphate acyltransferase (347 aa).

Belongs to the PlsX family. As to quaternary structure, homodimer. Probably interacts with PlsY.

The protein localises to the cytoplasm. The enzyme catalyses a fatty acyl-[ACP] + phosphate = an acyl phosphate + holo-[ACP]. It functions in the pathway lipid metabolism; phospholipid metabolism. Functionally, catalyzes the reversible formation of acyl-phosphate (acyl-PO(4)) from acyl-[acyl-carrier-protein] (acyl-ACP). This enzyme utilizes acyl-ACP as fatty acyl donor, but not acyl-CoA. The sequence is that of Phosphate acyltransferase from Oleidesulfovibrio alaskensis (strain ATCC BAA-1058 / DSM 17464 / G20) (Desulfovibrio alaskensis).